A 365-amino-acid chain; its full sequence is Heme A synthase (365 aa).

Transmembrane regions (helical) follow at residues 17–37 (AVRIWLTVVAALIAVMVLVGG), 107–127 (VIGIAYLLPFLWFLWRGAIGP), 132–152 (ALWGIFALGALQGAVGWWMVA), 164–184 (VRLAVHLTLALIIYAAIVWTL), 203–223 (AIALLALTLLQLFLGALVAGL), 264–283 (QFDHRMMAYALWALAAWHAI), 296–316 (GALWLFAALSLQAVLGILTVL), and 320–340 (PIGLALAHQAVGIVVLTLAVL). His-267 is a binding site for heme. His-327 contacts heme.

The protein belongs to the COX15/CtaA family. Type 2 subfamily. Interacts with CtaB. It depends on heme b as a cofactor.

The protein localises to the cell membrane. It carries out the reaction Fe(II)-heme o + 2 A + H2O = Fe(II)-heme a + 2 AH2. It functions in the pathway porphyrin-containing compound metabolism; heme A biosynthesis; heme A from heme O: step 1/1. Catalyzes the conversion of heme O to heme A by two successive hydroxylations of the methyl group at C8. The first hydroxylation forms heme I, the second hydroxylation results in an unstable dihydroxymethyl group, which spontaneously dehydrates, resulting in the formyl group of heme A. The chain is Heme A synthase from Rhodopseudomonas palustris (strain HaA2).